A 207-amino-acid polypeptide reads, in one-letter code: Outer-membrane lipoprotein carrier protein (207 aa).

Positions 1 to 21 (MRAIRMLLVSALTLGSVTAYA) are cleaved as a signal peptide.

The protein belongs to the LolA family. Monomer.

The protein localises to the periplasm. Its function is as follows. Participates in the translocation of lipoproteins from the inner membrane to the outer membrane. Only forms a complex with a lipoprotein if the residue after the N-terminal Cys is not an aspartate (The Asp acts as a targeting signal to indicate that the lipoprotein should stay in the inner membrane). This chain is Outer-membrane lipoprotein carrier protein, found in Pseudomonas putida (strain ATCC 47054 / DSM 6125 / CFBP 8728 / NCIMB 11950 / KT2440).